The following is a 201-amino-acid chain: NADH-quinone oxidoreductase subunit I (201 aa).

4Fe-4S ferredoxin-type domains follow at residues 78 to 107 (MSYE…RIEA) and 116 to 147 (KVVR…MTDI). 8 residues coordinate [4Fe-4S] cluster: Cys87, Cys90, Cys93, Cys97, Cys127, Cys130, Cys133, and Cys137.

The protein belongs to the complex I 23 kDa subunit family. NDH-1 is composed of 14 different subunits. Subunits NuoA, H, J, K, L, M, N constitute the membrane sector of the complex. Requires [4Fe-4S] cluster as cofactor.

Its subcellular location is the cell inner membrane. It catalyses the reaction a quinone + NADH + 5 H(+)(in) = a quinol + NAD(+) + 4 H(+)(out). In terms of biological role, NDH-1 shuttles electrons from NADH, via FMN and iron-sulfur (Fe-S) centers, to quinones in the respiratory chain. The immediate electron acceptor for the enzyme in this species is believed to be ubiquinone. Couples the redox reaction to proton translocation (for every two electrons transferred, four hydrogen ions are translocated across the cytoplasmic membrane), and thus conserves the redox energy in a proton gradient. The sequence is that of NADH-quinone oxidoreductase subunit I from Aquifex aeolicus (strain VF5).